The primary structure comprises 1368 residues: DNA-directed RNA polymerase subunit beta (1368 aa).

This sequence belongs to the RNA polymerase beta chain family. As to quaternary structure, the RNAP catalytic core consists of 2 alpha, 1 beta, 1 beta' and 1 omega subunit. When a sigma factor is associated with the core the holoenzyme is formed, which can initiate transcription.

The catalysed reaction is RNA(n) + a ribonucleoside 5'-triphosphate = RNA(n+1) + diphosphate. DNA-dependent RNA polymerase catalyzes the transcription of DNA into RNA using the four ribonucleoside triphosphates as substrates. In Burkholderia mallei (strain SAVP1), this protein is DNA-directed RNA polymerase subunit beta.